The chain runs to 221 residues: uncharacterized protein (221 aa).

6 helical membrane-spanning segments follow: residues 33-55 (YFLL…ISYI), 70-92 (FGYR…QKIV), 99-121 (LEML…FIII), 125-147 (YGAY…YTLL), 154-176 (YFND…SFWI), and 186-208 (IISM…ITLI).

Its subcellular location is the cell membrane. This is an uncharacterized protein from Aquifex aeolicus (strain VF5).